Here is a 316-residue protein sequence, read N- to C-terminus: MKKFGKKVVLVGDGSVGSSYAFAMVTQGIADEFVIIDIAKDKVEADVKDLNHGALYSSSPVTVKAGEYEDCKDADLVVITAGAPQKPGETRLQLVEKNTKIMKSIVTSVMDSGFDGFFLIAANPVDILTRYVKEVTGLPAERVIGSGTVLDSARFRYLISKELGVTSSSVHASIIGEHGDSELAVWSQANVGGISVYDTLKEETGSDAKANEIYINTRDAAYDIIQAKGSTYYGIALALLRISKALLNNENSILTVSSQLNGQYGFNDVYLGLPTLINQNGAVKIYETPLNDNELQLLEKSVKTLEDTYDSIKHLV.

Residues valine 16, aspartate 37, lysine 42, tyrosine 68, and 82-83 each bind NAD(+); that span reads GA. Substrate is bound by residues glutamine 85 and arginine 91. NAD(+) is bound by residues serine 104, 121–123, and serine 146; that span reads AAN. 123 to 126 is a binding site for substrate; the sequence is NPVD. 151–154 provides a ligand contact to substrate; the sequence is DSAR. Beta-D-fructose 1,6-bisphosphate-binding residues include arginine 156 and histidine 171. Residue histidine 178 is the Proton acceptor of the active site. The residue at position 222 (tyrosine 222) is a Phosphotyrosine. Substrate is bound at residue threonine 231.

This sequence belongs to the LDH/MDH superfamily. LDH family. As to quaternary structure, homotetramer.

It localises to the cytoplasm. It catalyses the reaction (S)-lactate + NAD(+) = pyruvate + NADH + H(+). It participates in fermentation; pyruvate fermentation to lactate; (S)-lactate from pyruvate: step 1/1. Its activity is regulated as follows. Allosterically activated by fructose 1,6-bisphosphate (FBP). Catalyzes the conversion of lactate to pyruvate. This Staphylococcus epidermidis (strain ATCC 12228 / FDA PCI 1200) protein is L-lactate dehydrogenase.